The following is a 299-amino-acid chain: Glycine--tRNA ligase alpha subunit (299 aa).

It belongs to the class-II aminoacyl-tRNA synthetase family. As to quaternary structure, tetramer of two alpha and two beta subunits.

The protein resides in the cytoplasm. The enzyme catalyses tRNA(Gly) + glycine + ATP = glycyl-tRNA(Gly) + AMP + diphosphate. This is Glycine--tRNA ligase alpha subunit from Lactiplantibacillus plantarum (strain ATCC BAA-793 / NCIMB 8826 / WCFS1) (Lactobacillus plantarum).